The sequence spans 213 residues: Redox-sensing transcriptional repressor Rex (213 aa).

The segment at residues 18-57 is a DNA-binding region (H-T-H motif); sequence LYYRFVNTLKSKGIDRVNSKAISEGLNIDSATIRRDFSYF. Residue 92-97 coordinates NAD(+); it reads GVGNLG.

It belongs to the transcriptional regulatory Rex family. Homodimer.

It is found in the cytoplasm. Functionally, modulates transcription in response to changes in cellular NADH/NAD(+) redox state. This is Redox-sensing transcriptional repressor Rex from Staphylococcus saprophyticus subsp. saprophyticus (strain ATCC 15305 / DSM 20229 / NCIMB 8711 / NCTC 7292 / S-41).